Here is an 85-residue protein sequence, read N- to C-terminus: Small ribosomal subunit protein uS17 (85 aa).

Belongs to the universal ribosomal protein uS17 family. As to quaternary structure, part of the 30S ribosomal subunit.

Its function is as follows. One of the primary rRNA binding proteins, it binds specifically to the 5'-end of 16S ribosomal RNA. In Mycoplasma genitalium (strain ATCC 33530 / DSM 19775 / NCTC 10195 / G37) (Mycoplasmoides genitalium), this protein is Small ribosomal subunit protein uS17.